Reading from the N-terminus, the 458-residue chain is Tetratricopeptide repeat protein 23-like (458 aa).

2 coiled-coil regions span residues 175-198 (GKQA…LNNG) and 246-278 (TSEL…QAYS).

The protein localises to the cytoplasm. Its subcellular location is the cytoskeleton. The protein resides in the microtubule organizing center. It localises to the centrosome. It is found in the spindle. The protein localises to the midbody. The chain is Tetratricopeptide repeat protein 23-like (Ttc23l) from Mus musculus (Mouse).